The chain runs to 564 residues: MSFSSGKFLFVFLFFFFFKNTSCSNQRKYITKQQTMSKDKKEHKDKKRKHDNEDVEIADSKKQRKLEKQEKKDKKDKKDKKEKKEKKEKKHKKEKKHKDSESSPVEPAANDSSSSTNYTQSSKLSSVSQSDIDKFLSDNEITVEDPSSSSLRPILSFDQVQLTSAITSKLSKFDKPTPIQSVSWPFLLSGKDVIGVAETGSGKTFAFGVPAINNIITTGNTKTLSVLCISPTRELALQIYDNLIELTADSGVNCVAVYGGVSKDDQIRKIKTANVVVATPGRLVDLINDGAINLGKVNYLVLDEADRMLEKGFEEDIKTIISNTSNSERQTLMFTATWPKEVRELANNFMNSPVKVTVGDRDELSANKRITQVVEVINKFDKEKKLIQLLRKYNANESSDNKILIFALYKKEASRIENFLKRNRFSVAAIHGDLSQQQRTAALSAFKSGQSNLLLATDVAARGLDIPNVKVVINLTFPLTIEDYVHRIGRTGRAGAKGTAHTLFTEDEKHLSGALCNILRGANQPVPEELLKFGGHTKKKAHSVYGAFYKDVDMTKTAKKIKFD.

Residues T31–S125 are disordered. The segment covering A58 to D73 has biased composition (basic and acidic residues). Basic residues predominate over residues K74–K96. Low complexity predominate over residues S112–S125. The short motif at L155–S181 is the Q motif element. One can recognise a Helicase ATP-binding domain in the interval W184–V356. An ATP-binding site is contributed by A197–T204. Positions D303–D306 match the DEAD box motif. The Helicase C-terminal domain occupies K385–G534.

It belongs to the DEAD box helicase family. DDX5/DBP2 subfamily.

It is found in the nucleus. It localises to the nucleolus. It catalyses the reaction ATP + H2O = ADP + phosphate + H(+). In terms of biological role, ATP-dependent RNA helicase required for 60S ribosomal subunit synthesis. Involved in efficient pre-rRNA processing, predominantly at site A3, which is necessary for the normal formation of 25S and 5.8S rRNAs. This Candida albicans (strain SC5314 / ATCC MYA-2876) (Yeast) protein is ATP-dependent RNA helicase DBP3 (DBP3).